Consider the following 312-residue polypeptide: Taste receptor type 2 member 9 (312 aa).

The Extracellular portion of the chain corresponds to 1 to 9; it reads MPSAIEAIY. Residues 10 to 32 traverse the membrane as a helical segment; it reads IILIAGELTIGIWGNGFIVLVNC. The Cytoplasmic segment spans residues 33-52; that stretch reads XDWLKRRDISLIDIILISLA. A helical membrane pass occupies residues 53–72; sequence ISRICLLCVISLDGFFMLLF. Residues 73 to 86 are Extracellular-facing; sequence PGTYGNSVLVSIVN. The chain crosses the membrane as a helical span at residues 87–109; that stretch reads VVWTFANNSSLWFTSCLSIFYLL. At 110-128 the chain is on the cytoplasmic side; the sequence is KIANISHPFFFWLKLKINK. Residues 129–146 traverse the membrane as a helical segment; it reads VMLAILLGSFLISLIISV. Topologically, residues 147–180 are extracellular; the sequence is XKNDDMWYHLFKVSXEENITWEFKVSKIPGTFKQ. N164 carries N-linked (GlcNAc...) asparagine glycosylation. A helical transmembrane segment spans residues 181–203; it reads LTLNLGGRVPFILCLISFFLLLF. The Cytoplasmic segment spans residues 204–234; sequence SLVRHTKQIQLHATGFRDPSTEAHMRAIKAV. Residues 235-257 form a helical membrane-spanning segment; sequence IIFLLLLIVYYPVFLVMTSSALI. Residues 258–261 are Extracellular-facing; sequence PQGK. The chain crosses the membrane as a helical span at residues 262 to 284; the sequence is LVLMIGDIVTVIFPSSHSFILIM. Residues 285–312 are Cytoplasmic-facing; it reads GNSKLREAFLKMLRFVKGFLRRRKPFVP.

It belongs to the G-protein coupled receptor T2R family.

It localises to the membrane. Gustducin-coupled receptor implicated in the perception of bitter compounds in the oral cavity and the gastrointestinal tract. Signals through PLCB2 and the calcium-regulated cation channel TRPM5. This is Taste receptor type 2 member 9 (TAS2R9) from Pan troglodytes (Chimpanzee).